The sequence spans 191 residues: Peptidyl-tRNA hydrolase (191 aa).

Position 14 (Y14) interacts with tRNA. H19 (proton acceptor) is an active-site residue. 3 residues coordinate tRNA: Y64, N66, and N112.

The protein belongs to the PTH family. As to quaternary structure, monomer.

Its subcellular location is the cytoplasm. It carries out the reaction an N-acyl-L-alpha-aminoacyl-tRNA + H2O = an N-acyl-L-amino acid + a tRNA + H(+). In terms of biological role, hydrolyzes ribosome-free peptidyl-tRNAs (with 1 or more amino acids incorporated), which drop off the ribosome during protein synthesis, or as a result of ribosome stalling. Its function is as follows. Catalyzes the release of premature peptidyl moieties from peptidyl-tRNA molecules trapped in stalled 50S ribosomal subunits, and thus maintains levels of free tRNAs and 50S ribosomes. The sequence is that of Peptidyl-tRNA hydrolase from Clostridium botulinum (strain Eklund 17B / Type B).